Consider the following 398-residue polypeptide: Phosphoglycerate kinase (398 aa).

Substrate is bound by residues 23–25 (DLN), R38, 61–64 (HFGR), R119, and R152. Residues K202, E324, and 354 to 357 (GGDT) each bind ATP.

The protein belongs to the phosphoglycerate kinase family. As to quaternary structure, monomer.

Its subcellular location is the cytoplasm. The enzyme catalyses (2R)-3-phosphoglycerate + ATP = (2R)-3-phospho-glyceroyl phosphate + ADP. Its pathway is carbohydrate degradation; glycolysis; pyruvate from D-glyceraldehyde 3-phosphate: step 2/5. The chain is Phosphoglycerate kinase from Rhodopseudomonas palustris (strain ATCC BAA-98 / CGA009).